Here is a 429-residue protein sequence, read N- to C-terminus: Glutamate-1-semialdehyde 2,1-aminomutase (429 aa).

K267 bears the N6-(pyridoxal phosphate)lysine mark.

This sequence belongs to the class-III pyridoxal-phosphate-dependent aminotransferase family. HemL subfamily. Homodimer. The cofactor is pyridoxal 5'-phosphate.

It is found in the cytoplasm. The enzyme catalyses (S)-4-amino-5-oxopentanoate = 5-aminolevulinate. It participates in porphyrin-containing compound metabolism; protoporphyrin-IX biosynthesis; 5-aminolevulinate from L-glutamyl-tRNA(Glu): step 2/2. This Xanthomonas axonopodis pv. citri (strain 306) protein is Glutamate-1-semialdehyde 2,1-aminomutase.